A 1165-amino-acid chain; its full sequence is Chitin synthase 3 (1165 aa).

The Cytoplasmic portion of the chain corresponds to 1-170; sequence MTGLNGDDPD…ETNDTLSFWQ (170 aa). 2 disordered regions span residues 19–53 and 74–97; these read DEES…NNPD and PSST…GSVR. Over residues 74-92 the composition is skewed to polar residues; the sequence is PSSTGVNPNATRRSGSLRS. Lys136 participates in a covalent cross-link: Glycyl lysine isopeptide (Lys-Gly) (interchain with G-Cter in ubiquitin). The helical transmembrane segment at 171 to 191 threads the bilayer; sequence MYCYFITFWAPAPILAFCGMP. At 192–340 the chain is on the extracellular side; the sequence is KKERQMAWRE…PNFTVENYAG (149 aa). Residues Asn303 and Asn332 are each glycosylated (N-linked (GlcNAc...) asparagine). Residues 341 to 354 form a helical membrane-spanning segment; sequence WNCHTSKEDRDAFY. The Cytoplasmic segment spans residues 355–452; sequence GLKSKADVYF…SKTVGCIASD (98 aa). A helical transmembrane segment spans residues 453–473; the sequence is VVLYVSLVFILSVVIIKFIIA. Over 474 to 891 the chain is Extracellular; sequence CYFRWTVARK…EYYISHHQAK (418 aa). Residue Ser537 is modified to Phosphoserine. At Thr538 the chain carries Phosphothreonine. A helical transmembrane segment spans residues 892 to 910; it reads AFESVFGSVTCLPGCFSMY. Residues 911–1029 lie on the Cytoplasmic side of the membrane; that stretch reads RIKSPKGSDG…SMQFVIGIEL (119 aa). The helical transmembrane segment at 1030 to 1050 threads the bilayer; sequence IGTMVLPLAICFTIYVIIFAI. At 1051–1055 the chain is on the extracellular side; it reads VSKPT. Residues 1056 to 1076 form a helical membrane-spanning segment; it reads PVITLVLLAIILGLPGLIVVI. The Cytoplasmic segment spans residues 1077-1165; it reads TATRWSYLWW…RKEESDSFVA (89 aa).

Belongs to the chitin synthase family. Class IV subfamily. In terms of assembly, homodimer. May form higher order oligomers. Seems to interact with BNI4 and SKT5 which link CHS3 to septins. In terms of processing, glycosylated. Post-translationally, palmitoylated by PFA4; required for proper export from the ER.

It localises to the cell membrane. The protein resides in the bud neck. The protein localises to the cytoplasmic vesicle membrane. The enzyme catalyses [(1-&gt;4)-N-acetyl-beta-D-glucosaminyl](n) + UDP-N-acetyl-alpha-D-glucosamine = [(1-&gt;4)-N-acetyl-beta-D-glucosaminyl](n+1) + UDP + H(+). Its function is as follows. Polymerizes chitin, a structural polymer of the cell wall and septum, by transferring the sugar moiety of UDP-GlcNAc to the non-reducing end of the growing chitin polymer. Appears to be responsible for synthesis of the majority of the chitin found in the cell wall periphery. It is involved in the synthesis of the chitin ring that forms in the cell wall just before bud emergence. This ring remains at the base of the bud as the bud grows and ultimately forms part of the bud scar marking the division site on the mother cell. Also catalyzes the synthesis of chitin laid down during mating and spore cell-wall synthesis. The sequence is that of Chitin synthase 3 from Saccharomyces cerevisiae (strain ATCC 204508 / S288c) (Baker's yeast).